The chain runs to 21 residues: Cupiennin-6c (21 aa).

Serine 21 carries the serine amide modification.

Expressed by the venom gland.

The protein localises to the secreted. In Cupiennius salei (American wandering spider), this protein is Cupiennin-6c.